A 622-amino-acid polypeptide reads, in one-letter code: Basic helix-loop-helix ARNT-like protein 2 (622 aa).

The segment covering 1–10 has biased composition (low complexity); that stretch reads MAEAGVGSAE. Disordered regions lie at residues 1-29 and 41-86; these read MAEA…DGNS and PITK…EDEE. A compositionally biased stretch (polar residues) spans 45 to 54; it reads PATTSFNNSV. A compositionally biased stretch (acidic residues) spans 67-76; it reads DNQDTVEVDG. The segment covering 77 to 86 has biased composition (basic and acidic residues); sequence DPQKRNEDEE. A bHLH domain is found at 92–145; it reads DFREAHSQTEKRRRDKMNNLIEELSAMIPQCNPMARKLDKLTVLRMAVQHLKSL. PAS domains lie at 163–235 and 342–412; these read KDDE…DVSP and VPQK…LQNK. A PAC domain is found at 417–460; the sequence is TNSYKFRAKDGSFITLKSQWFSFMNPWTKELEYIVSNNTVVLGH.

As to quaternary structure, component of the circadian core oscillator, which includes the CRY proteins, CLOCK, or NPAS2, BMAL1 or BMAL2, CSNK1D and/or CSNK1E, TIMELESS and the PER proteins. Interacts directly with CLOCK to form the BMAL2-CLOCK transactivator. Can form heterodimers or homodimers which interact directly with CLOCK to form the transcription activator. Expressed in the pineal gland.

Its subcellular location is the nucleus. Transcriptional activator which forms a core component of the circadian clock. The circadian clock, an internal time-keeping system, regulates various physiological processes through the generation of approximately 24 hour circadian rhythms in gene expression, which are translated into rhythms in metabolism and behavior. It is derived from the Latin roots 'circa' (about) and 'diem' (day) and acts as an important regulator of a wide array of physiological functions including metabolism, sleep, body temperature, blood pressure, endocrine, immune, cardiovascular, and renal function. Consists of two major components: the central clock, residing in the suprachiasmatic nucleus (SCN) of the brain, and the peripheral clocks that are present in nearly every tissue and organ system. Both the central and peripheral clocks can be reset by environmental cues, also known as Zeitgebers (German for 'timegivers'). The predominant Zeitgeber for the central clock is light, which is sensed by retina and signals directly to the SCN. The central clock entrains the peripheral clocks through neuronal and hormonal signals, body temperature and feeding-related cues, aligning all clocks with the external light/dark cycle. Circadian rhythms allow an organism to achieve temporal homeostasis with its environment at the molecular level by regulating gene expression to create a peak of protein expression once every 24 hours to control when a particular physiological process is most active with respect to the solar day. Transcription and translation of core clock components (CLOCK, NPAS2, BMAL1, BMAL2, PER1, PER2, PER3, CRY1 and CRY2) plays a critical role in rhythm generation, whereas delays imposed by post-translational modifications (PTMs) are important for determining the period (tau) of the rhythms (tau refers to the period of a rhythm and is the length, in time, of one complete cycle). A diurnal rhythm is synchronized with the day/night cycle, while the ultradian and infradian rhythms have a period shorter and longer than 24 hours, respectively. Disruptions in the circadian rhythms contribute to the pathology of cardiovascular diseases, cancer, metabolic syndromes and aging. A transcription/translation feedback loop (TTFL) forms the core of the molecular circadian clock mechanism. Transcription factors, CLOCK or NPAS2 and BMAL1 or BMAL2, form the positive limb of the feedback loop, act in the form of a heterodimer and activate the transcription of core clock genes and clock-controlled genes (involved in key metabolic processes), harboring E-box elements (5'-CACGTG-3') within their promoters. The core clock genes: PER1/2/3 and CRY1/2 which are transcriptional repressors form the negative limb of the feedback loop and interact with the CLOCK|NPAS2-BMAL1|BMAL2 heterodimer inhibiting its activity and thereby negatively regulating their own expression. This heterodimer also activates nuclear receptors NR1D1/2 and RORA/B/G, which form a second feedback loop and which activate and repress BMAL1 transcription, respectively. The preferred binding motif for the CLOCK-BMAL1 heterodimer is 5'-CACGTGA-3', which contains a flanking adenine nucleotide at the 3-prime end of the canonical 6-nucleotide E-box sequence. CLOCK specifically binds to the half-site 5'-CAC-3', while BMAL1 binds to the half-site 5'-GTGA-3'. The sequence is that of Basic helix-loop-helix ARNT-like protein 2 (BMAL2) from Gallus gallus (Chicken).